Reading from the N-terminus, the 396-residue chain is Purple acid phosphatase 5 (396 aa).

An N-terminal signal peptide occupies residues 1-13 (MSLETFPPPAGYN). Asparagine 58 carries an N-linked (GlcNAc...) asparagine glycan. Residue aspartate 125 participates in Fe cation binding. N-linked (GlcNAc...) asparagine glycosylation is present at asparagine 133. Fe cation is bound by residues aspartate 153 and tyrosine 156. Aspartate 153 serves as a coordination point for Zn(2+). Asparagine 190 contacts Zn(2+). Position 190 (asparagine 190) interacts with substrate. The N-linked (GlcNAc...) asparagine glycan is linked to asparagine 238. Histidine 250 lines the Zn(2+) pocket. Histidine 260 (proton donor) is an active-site residue. Position 287 (histidine 287) interacts with Zn(2+). Substrate is bound at residue 287–289 (HVH). Histidine 289 serves as a coordination point for Fe cation. N-linked (GlcNAc...) asparagine glycosylation is found at asparagine 303 and asparagine 360.

This sequence belongs to the metallophosphoesterase superfamily. Purple acid phosphatase family. As to quaternary structure, homodimer. It depends on Fe cation as a cofactor. Zn(2+) serves as cofactor.

The protein localises to the secreted. The catalysed reaction is a phosphate monoester + H2O = an alcohol + phosphate. The chain is Purple acid phosphatase 5 (PAP5) from Arabidopsis thaliana (Mouse-ear cress).